Here is a 149-residue protein sequence, read N- to C-terminus: Large ribosomal subunit protein bL9 (149 aa).

This sequence belongs to the bacterial ribosomal protein bL9 family.

In terms of biological role, binds to the 23S rRNA. In Anaeromyxobacter dehalogenans (strain 2CP-C), this protein is Large ribosomal subunit protein bL9.